We begin with the raw amino-acid sequence, 390 residues long: Putative 2-isopropylmalate synthase (390 aa).

A Pyruvate carboxyltransferase domain is found at 5-267 (IIIFDTTLRD…KTNIKYQEIY (263 aa)). Residues Asp-14, His-202, His-204, and Asn-238 each coordinate Mn(2+).

This sequence belongs to the alpha-IPM synthase/homocitrate synthase family. LeuA type 1 subfamily. In terms of assembly, homodimer. Mn(2+) serves as cofactor.

The protein localises to the cytoplasm. It carries out the reaction 3-methyl-2-oxobutanoate + acetyl-CoA + H2O = (2S)-2-isopropylmalate + CoA + H(+). It participates in amino-acid biosynthesis; L-leucine biosynthesis; L-leucine from 3-methyl-2-oxobutanoate: step 1/4. Its function is as follows. Catalyzes the condensation of the acetyl group of acetyl-CoA with 3-methyl-2-oxobutanoate (2-ketoisovalerate) to form 3-carboxy-3-hydroxy-4-methylpentanoate (2-isopropylmalate). In Buchnera aphidicola subsp. Baizongia pistaciae (strain Bp), this protein is Putative 2-isopropylmalate synthase.